The chain runs to 500 residues: Cytochrome P450 71D7 (500 aa).

Cysteine 441 is a binding site for heme.

It belongs to the cytochrome P450 family. Heme serves as cofactor.

The polypeptide is Cytochrome P450 71D7 (CYP71D7) (Solanum chacoense (Chaco potato)).